A 550-amino-acid chain; its full sequence is Acidic amino acid decarboxylase GADL1 (550 aa).

The residue at position 362 (K362) is an N6-(pyridoxal phosphate)lysine.

Belongs to the group II decarboxylase family. In terms of assembly, homodimer. Requires pyridoxal 5'-phosphate as cofactor. As to expression, expressed in skeletal muscles and kidney (at protein level). Expressed in skeletal muscle and weakly in brain. Not expressed in liver or kidney. Expressed in brain, olfactory bulb, liver, muscle and kidney with the highest expression in olfactory bulb and almost not detected in liver (at protein level).

The enzyme catalyses L-aspartate + H(+) = beta-alanine + CO2. The catalysed reaction is 3-sulfino-L-alanine + H(+) = hypotaurine + CO2. It carries out the reaction L-cysteate + H(+) = taurine + CO2. Its activity is regulated as follows. Activated weakly by 0.2-0.4 mM Li(+). Inhibited by bis-carboxymethyl-trithiocarbonate, ethylxanthogenacetic acid and 2,5-disulfoaniline. Functionally, catalyzes the decarboxylation of L-aspartate, 3-sulfino-L-alanine (cysteine sulfinic acid), and L-cysteate to beta-alanine, hypotaurine and taurine, respectively. The preferred substrate is L-aspartate. Does not exhibit any decarboxylation activity toward glutamate. This is Acidic amino acid decarboxylase GADL1 from Mus musculus (Mouse).